Consider the following 430-residue polypeptide: FAD-dependent monooxygenase asL4 (430 aa).

FAD is bound by residues 11–14 (GGIA), 33–34 (ER), Arg-108, and Tyr-278.

Belongs to the aromatic-ring hydroxylase family. FAD is required as a cofactor.

The protein operates within secondary metabolite biosynthesis; terpenoid biosynthesis. Functionally, flavin-dependent monooxygenase; part of the gene cluster that mediates the biosynthesis of xenovulene A, an unusual meroterpenoid that has potent inhibitory effects on the human gamma-aminobutyrate A (GABAA) benzodiazepine receptor. The first step of xenovulene A biosynthesis is the biosynthesis of 3-methylorcinaldehyde performed by the non-reducing polyketide synthase aspks1. The salicylate hydroxylase asL1 then catalyzes the oxidative dearomatization of 3-methylorcinaldehyde to yield a dearomatized hydroxycyclohexadione. The 2-oxoglutarate-dependent dioxygenase asL3 further catalyzes the oxidative ring expansion to provide the first tropolone metabolite. The cytochrome P450 monooxygenase asR2 allows the synthesis of tropolone hemiacetal. In parallel, a previously unrecognised class of terpene cyclase, asR6, produces alpha-humulene from farnesylpyrophosphate (FPP). The putative Diels-Alderase asR5 probably catalyzes the formation of the tropolone-humulene skeleton by linking humulene and the polyketide moiety. Oxidative-ring contractions catalyzed by asL4 and asL6 then processively remove carbon atoms from the polyketide to yield xenovulene A. In Sarocladium schorii (Acremonium strictum (strain IMI 501407)), this protein is FAD-dependent monooxygenase asL4.